We begin with the raw amino-acid sequence, 615 residues long: Dihydroxy-acid dehydratase (615 aa).

A Mg(2+)-binding site is contributed by Asp81. Position 122 (Cys122) interacts with [2Fe-2S] cluster. 2 residues coordinate Mg(2+): Asp123 and Lys124. The residue at position 124 (Lys124) is an N6-carboxylysine. Cys195 is a [2Fe-2S] cluster binding site. Glu491 is a Mg(2+) binding site. The active-site Proton acceptor is the Ser517.

It belongs to the IlvD/Edd family. Homodimer. The cofactor is [2Fe-2S] cluster. Mg(2+) is required as a cofactor.

It carries out the reaction (2R)-2,3-dihydroxy-3-methylbutanoate = 3-methyl-2-oxobutanoate + H2O. The enzyme catalyses (2R,3R)-2,3-dihydroxy-3-methylpentanoate = (S)-3-methyl-2-oxopentanoate + H2O. It functions in the pathway amino-acid biosynthesis; L-isoleucine biosynthesis; L-isoleucine from 2-oxobutanoate: step 3/4. The protein operates within amino-acid biosynthesis; L-valine biosynthesis; L-valine from pyruvate: step 3/4. Its function is as follows. Functions in the biosynthesis of branched-chain amino acids. Catalyzes the dehydration of (2R,3R)-2,3-dihydroxy-3-methylpentanoate (2,3-dihydroxy-3-methylvalerate) into 2-oxo-3-methylpentanoate (2-oxo-3-methylvalerate) and of (2R)-2,3-dihydroxy-3-methylbutanoate (2,3-dihydroxyisovalerate) into 2-oxo-3-methylbutanoate (2-oxoisovalerate), the penultimate precursor to L-isoleucine and L-valine, respectively. The protein is Dihydroxy-acid dehydratase of Shewanella halifaxensis (strain HAW-EB4).